Consider the following 543-residue polypeptide: Phenylalanine--tRNA ligase beta subunit (543 aa).

In terms of domain architecture, B5 spans 269–344 (FDFRIMRPAR…KSKGIENIEE (76 aa)). Mg(2+) contacts are provided by aspartate 322, aspartate 328, glutamate 331, and aspartate 332.

It belongs to the phenylalanyl-tRNA synthetase beta subunit family. Type 2 subfamily. Tetramer of two alpha and two beta subunits. It depends on Mg(2+) as a cofactor.

Its subcellular location is the cytoplasm. It carries out the reaction tRNA(Phe) + L-phenylalanine + ATP = L-phenylalanyl-tRNA(Phe) + AMP + diphosphate + H(+). The sequence is that of Phenylalanine--tRNA ligase beta subunit from Thermoplasma acidophilum (strain ATCC 25905 / DSM 1728 / JCM 9062 / NBRC 15155 / AMRC-C165).